A 382-amino-acid polypeptide reads, in one-letter code: Lipid-A-disaccharide synthase (382 aa).

This sequence belongs to the LpxB family.

The catalysed reaction is 2-N,3-O-bis[(3R)-3-hydroxytetradecanoyl]-alpha-D-glucosaminyl 1-phosphate + UDP-2-N,3-O-bis[(3R)-3-hydroxytetradecanoyl]-alpha-D-glucosamine = lipid A disaccharide (E. coli) + UDP + H(+). It catalyses the reaction a lipid X + a UDP-2-N,3-O-bis[(3R)-3-hydroxyacyl]-alpha-D-glucosamine = a lipid A disaccharide + UDP + H(+). Its pathway is glycolipid biosynthesis; lipid IV(A) biosynthesis; lipid IV(A) from (3R)-3-hydroxytetradecanoyl-[acyl-carrier-protein] and UDP-N-acetyl-alpha-D-glucosamine: step 5/6. Condensation of UDP-2,3-diacylglucosamine and 2,3-diacylglucosamine-1-phosphate to form lipid A disaccharide, a precursor of lipid A, a phosphorylated glycolipid that anchors the lipopolysaccharide to the outer membrane of the cell. This is Lipid-A-disaccharide synthase from Salmonella paratyphi B (strain ATCC BAA-1250 / SPB7).